A 282-amino-acid chain; its full sequence is 2-dehydro-3-deoxyphosphooctonate aldolase (282 aa).

It belongs to the KdsA family.

It is found in the cytoplasm. The catalysed reaction is D-arabinose 5-phosphate + phosphoenolpyruvate + H2O = 3-deoxy-alpha-D-manno-2-octulosonate-8-phosphate + phosphate. It participates in carbohydrate biosynthesis; 3-deoxy-D-manno-octulosonate biosynthesis; 3-deoxy-D-manno-octulosonate from D-ribulose 5-phosphate: step 2/3. It functions in the pathway bacterial outer membrane biogenesis; lipopolysaccharide biosynthesis. The chain is 2-dehydro-3-deoxyphosphooctonate aldolase from Bartonella bacilliformis (strain ATCC 35685 / KC583 / Herrer 020/F12,63).